The primary structure comprises 540 residues: Kinesin light chain (540 aa).

Residues 34-138 (LETSVKGVKE…NKHLKYMASI (105 aa)) are a coiled coil. TPR repeat units follow at residues 206–239 (LRTL…LEKT), 248–281 (ATML…REKC), 290–323 (AATL…REKV), 332–365 (AKQL…YESK), 374–407 (AKTK…AHER), and 456–489 (TTTL…KKQH).

It belongs to the kinesin light chain family. In terms of assembly, oligomeric complex composed of two heavy chains and two light chains. Interacts with unc-83; the interaction is direct. Interacts with unc-33; the interaction regulates unc-33 neurite localization. Interacts with casy-1.

It localises to the cytoplasm. The protein localises to the cytoskeleton. The protein resides in the nucleus envelope. In terms of biological role, kinesin is a microtubule-associated force-producing protein that may play a role in organelle transport. The light chain may function in coupling of cargo to the heavy chain or in the modulation of its ATPase activity. Recruits unc-83 (within the unc-83-unc-84 LINC complex) to the nuclear envelope during nuclear migration to mediate the link between the nuclear envelope and the microtubule cytoskeleton in hypodermal precursor cells. The sequence is that of Kinesin light chain from Caenorhabditis elegans.